A 517-amino-acid polypeptide reads, in one-letter code: Crotonobetaine/carnitine--CoA ligase (517 aa).

Belongs to the ATP-dependent AMP-binding enzyme family.

It catalyses the reaction 4-(trimethylamino)butanoate + ATP + CoA = 4-(trimethylamino)butanoyl-CoA + AMP + diphosphate. It carries out the reaction crotonobetaine + ATP + CoA = crotonobetainyl-CoA + AMP + diphosphate. The catalysed reaction is (R)-carnitine + ATP + CoA = (R)-carnitinyl-CoA + AMP + diphosphate. It participates in amine and polyamine metabolism; carnitine metabolism. In terms of biological role, catalyzes the transfer of CoA to carnitine, generating the initial carnitinyl-CoA needed for the CaiB reaction cycle. Also has activity toward crotonobetaine and gamma-butyrobetaine. In Escherichia coli O139:H28 (strain E24377A / ETEC), this protein is Crotonobetaine/carnitine--CoA ligase.